We begin with the raw amino-acid sequence, 378 residues long: Chaperone protein DnaJ 2 (378 aa).

The J domain occupies 4-68 (DYYGLLGVSR…EKRRIVDLGG (65 aa)). Residues 128–210 (GVTKQVTVDT…CVGDGRVRAR (83 aa)) form a CR-type zinc finger. Cys141, Cys144, Cys158, Cys161, Cys184, Cys187, Cys198, and Cys201 together coordinate Zn(2+). 4 CXXCXGXG motif repeats span residues 141–148 (CDRCQGKG), 158–165 (CDTCGGRG), 184–191 (CPTCRGVG), and 198–205 (CCQCVGDG).

This sequence belongs to the DnaJ family. In terms of assembly, homodimer. Requires Zn(2+) as cofactor.

Its subcellular location is the cytoplasm. Participates actively in the response to hyperosmotic and heat shock by preventing the aggregation of stress-denatured proteins and by disaggregating proteins, also in an autonomous, DnaK-independent fashion. Unfolded proteins bind initially to DnaJ; upon interaction with the DnaJ-bound protein, DnaK hydrolyzes its bound ATP, resulting in the formation of a stable complex. GrpE releases ADP from DnaK; ATP binding to DnaK triggers the release of the substrate protein, thus completing the reaction cycle. Several rounds of ATP-dependent interactions between DnaJ, DnaK and GrpE are required for fully efficient folding. Also involved, together with DnaK and GrpE, in the DNA replication of plasmids through activation of initiation proteins. This Mycobacterium leprae (strain TN) protein is Chaperone protein DnaJ 2.